Consider the following 49-residue polypeptide: uncharacterized protein (49 aa).

The helical transmembrane segment at 31–48 (PDLYTIIVSYFSIFSLFF) threads the bilayer.

Its subcellular location is the membrane. This is an uncharacterized protein from Saccharomyces cerevisiae (strain ATCC 204508 / S288c) (Baker's yeast).